The chain runs to 127 residues: Large ribosomal subunit protein bL12 (127 aa).

Belongs to the bacterial ribosomal protein bL12 family. As to quaternary structure, homodimer. Part of the ribosomal stalk of the 50S ribosomal subunit. Forms a multimeric L10(L12)X complex, where L10 forms an elongated spine to which 2 to 4 L12 dimers bind in a sequential fashion. Binds GTP-bound translation factors.

Its function is as follows. Forms part of the ribosomal stalk which helps the ribosome interact with GTP-bound translation factors. Is thus essential for accurate translation. The chain is Large ribosomal subunit protein bL12 from Chloroherpeton thalassium (strain ATCC 35110 / GB-78).